We begin with the raw amino-acid sequence, 189 residues long: GTPase NRas (189 aa).

GTP contacts are provided by residues 10 to 18 (GAGGVGKSA) and 29 to 30 (VD). The Effector region motif lies at 32–40 (YDPTIEDSY). Position 57-61 (57-61 (DTAGQ)) interacts with GTP. Ser-89 carries the post-translational modification Phosphoserine. A GTP-binding site is contributed by 116–119 (NKCD). The interval 166–185 (YRMKKLNSSDDGTQGCLGLS) is hypervariable region. A Glycyl lysine isopeptide (Lys-Gly) (interchain with G-Cter in ubiquitin) cross-link involves residue Lys-170. Cys-181 carries S-palmitoyl cysteine lipidation. Cys-186 is lipidated: S-farnesyl cysteine. Positions 187–189 (AVM) are cleaved as a propeptide — removed in mature form.

The protein belongs to the small GTPase superfamily. Ras family. As to quaternary structure, interacts (active GTP-bound form preferentially) with RGS14. Interacts (active GTP-bound form) with RASSF7. Interacts (active GTP-bound form) with both SHOC2 and PP1c (all isoforms) to form a tertiary complex; SHOC2 and PP1c preferably bind M-Ras/MRAS, but they also bind K-Ras/KRAS, N-Ras/NRAS and H-Ras/HRAS. Post-translationally, palmitoylated by the ZDHHC9-GOLGA7 complex. Depalmitoylated by ABHD17A, ABHD17B and ABHD17C. A continuous cycle of de- and re-palmitoylation regulates rapid exchange between plasma membrane and Golgi. In terms of processing, acetylation at Lys-104 prevents interaction with guanine nucleotide exchange factors (GEFs). Ubiquitinated by the BCR(LZTR1) E3 ubiquitin ligase complex at Lys-170 in a non-degradative manner, leading to inhibit Ras signaling by decreasing Ras association with membranes. Post-translationally, phosphorylation at Ser-89 enhances NRAS association with its downstream effectors.

The protein localises to the cell membrane. The protein resides in the golgi apparatus membrane. The catalysed reaction is GTP + H2O = GDP + phosphate + H(+). Its activity is regulated as follows. Alternates between an inactive form bound to GDP and an active form bound to GTP. Activated by a guanine nucleotide-exchange factor (GEF) and inactivated by a GTPase-activating protein (GAP). Functionally, ras proteins bind GDP/GTP and possess intrinsic GTPase activity. This Monodelphis domestica (Gray short-tailed opossum) protein is GTPase NRas (NRAS).